The following is a 339-amino-acid chain: D-alanine--D-alanine ligase (339 aa).

In terms of domain architecture, ATP-grasp spans 126-333 (KQVLDSAGIP…YSELVTRLVE (208 aa)). ATP is bound at residue 158-213 (AAELGYPLFVKPANLGSSVGISKVGSPEELDAALTLAFGLDRRVILEAMTPHKPRE). Asp-286, Glu-300, and Asn-302 together coordinate Mg(2+).

This sequence belongs to the D-alanine--D-alanine ligase family. Requires Mg(2+) as cofactor. The cofactor is Mn(2+).

The protein resides in the cytoplasm. It catalyses the reaction 2 D-alanine + ATP = D-alanyl-D-alanine + ADP + phosphate + H(+). It functions in the pathway cell wall biogenesis; peptidoglycan biosynthesis. Cell wall formation. The chain is D-alanine--D-alanine ligase from Deinococcus radiodurans (strain ATCC 13939 / DSM 20539 / JCM 16871 / CCUG 27074 / LMG 4051 / NBRC 15346 / NCIMB 9279 / VKM B-1422 / R1).